A 372-amino-acid chain; its full sequence is Glutamate 5-kinase (372 aa).

Lys-14 contacts ATP. Ser-54, Asp-141, and Asn-153 together coordinate substrate. 173–174 serves as a coordination point for ATP; that stretch reads TD. The PUA domain occupies 280 to 358; the sequence is RGTVVIDDGA…SQIESLLGYS (79 aa).

The protein belongs to the glutamate 5-kinase family.

It is found in the cytoplasm. It carries out the reaction L-glutamate + ATP = L-glutamyl 5-phosphate + ADP. The protein operates within amino-acid biosynthesis; L-proline biosynthesis; L-glutamate 5-semialdehyde from L-glutamate: step 1/2. Catalyzes the transfer of a phosphate group to glutamate to form L-glutamate 5-phosphate. The polypeptide is Glutamate 5-kinase (Methylibium petroleiphilum (strain ATCC BAA-1232 / LMG 22953 / PM1)).